We begin with the raw amino-acid sequence, 189 residues long: GMP synthase [glutamine-hydrolyzing] subunit A (189 aa).

The region spanning 5–189 is the Glutamine amidotransferase type-1 domain; the sequence is KILVVNNYGQ…TNFLEICEKY (185 aa). Residue C79 is the Nucleophile of the active site. Catalysis depends on residues H166 and E168.

As to quaternary structure, heterodimer composed of a glutamine amidotransferase subunit (A) and a GMP-binding subunit (B).

It carries out the reaction XMP + L-glutamine + ATP + H2O = GMP + L-glutamate + AMP + diphosphate + 2 H(+). It functions in the pathway purine metabolism; GMP biosynthesis; GMP from XMP (L-Gln route): step 1/1. Its function is as follows. Catalyzes the synthesis of GMP from XMP. In Methanosarcina barkeri (strain Fusaro / DSM 804), this protein is GMP synthase [glutamine-hydrolyzing] subunit A.